Here is a 193-residue protein sequence, read N- to C-terminus: Thymidine kinase (193 aa).

Residues Ser9–Ser16 and Asp87–Gln90 each bind ATP. The Proton acceptor role is filled by Glu88. Zn(2+)-binding residues include Cys145, Cys147, Cys182, and His185.

Belongs to the thymidine kinase family. As to quaternary structure, homotetramer.

Its subcellular location is the cytoplasm. The catalysed reaction is thymidine + ATP = dTMP + ADP + H(+). The sequence is that of Thymidine kinase from Haemophilus influenzae (strain ATCC 51907 / DSM 11121 / KW20 / Rd).